Consider the following 217-residue polypeptide: uncharacterized protein (217 aa).

The next 7 helical transmembrane spans lie at 4–23, 44–66, 76–98, 111–128, 132–154, 166–188, and 198–215; these read IYGI…GKET, NVVI…LTWV, TVET…SIII, FLYL…IHAI, MAMV…PLAL, AGTA…IVLF, and LLLS…ALQL.

It is found in the cell membrane. This is an uncharacterized protein from Archaeoglobus fulgidus (strain ATCC 49558 / DSM 4304 / JCM 9628 / NBRC 100126 / VC-16).